A 423-amino-acid chain; its full sequence is Zinc finger and BTB domain-containing protein 6 (423 aa).

The region spanning 33–97 (CDVSIYINDT…CYTGALEVKR (65 aa)) is the BTB domain. At Ser-201 the chain carries Phosphoserine. 4 consecutive C2H2-type zinc fingers follow at residues 300–322 (HQCP…LKMH), 325–347 (FLCL…IRGH), 353–375 (FQCT…LNIH), and 381–404 (YKCH…TSVH).

The protein localises to the nucleus. May be involved in transcriptional regulation. The protein is Zinc finger and BTB domain-containing protein 6 (Zbtb6) of Mus musculus (Mouse).